The primary structure comprises 192 residues: SPbeta prophage-derived uncharacterized protein YokK (192 aa).

The protein is SPbeta prophage-derived uncharacterized protein YokK (yokK) of Bacillus subtilis (strain 168).